The following is a 405-amino-acid chain: Glycosylated lysosomal membrane protein A (405 aa).

A signal peptide spans 1–25 (MGCTRGWRLLLLLGLVCVGALQGRG). Over 26 to 365 (QEESREVSLQ…YGEPPRDSFS (340 aa)) the chain is Lumenal. 15 N-linked (GlcNAc...) asparagine glycosylation sites follow: Asn-55, Asn-86, Asn-125, Asn-129, Asn-143, Asn-153, Asn-157, Asn-164, Asn-169, Asn-179, Asn-206, Asn-222, Asn-267, Asn-304, and Asn-331. A helical membrane pass occupies residues 366 to 386 (ILVICIMAVALGTPLLLLIVG). Over 387-405 (TLVVTALRHKVYSNYEPIN) the chain is Cytoplasmic. Residues 401 to 405 (YEPIN) carry the Lysosomal targeting motif motif.

Belongs to the GLMP family. In terms of assembly, interacts (via lumenal domain) with lysosomal protein MFSD1; the interaction starts while both proteins are still in the endoplasmic reticulum and is required for stabilization of MFSD1 in lysosomes but has no direct effect on its targeting to lysosomes or transporter activity.

The protein localises to the lysosome membrane. Its function is as follows. Required to protect lysosomal transporter MFSD1 from lysosomal proteolysis and for MFSD1 lysosomal localization. This is Glycosylated lysosomal membrane protein A (glmp-a) from Xenopus laevis (African clawed frog).